Consider the following 421-residue polypeptide: UDP-N-acetylglucosamine 1-carboxyvinyltransferase 1 (421 aa).

Residue 22-23 participates in phosphoenolpyruvate binding; it reads KN. A UDP-N-acetyl-alpha-D-glucosamine-binding site is contributed by Arg94. Cys118 functions as the Proton donor in the catalytic mechanism. Cys118 is modified (2-(S-cysteinyl)pyruvic acid O-phosphothioketal). UDP-N-acetyl-alpha-D-glucosamine is bound by residues 123–127, Asp310, and Val332; that span reads RPIEL.

Belongs to the EPSP synthase family. MurA subfamily.

The protein resides in the cytoplasm. It carries out the reaction phosphoenolpyruvate + UDP-N-acetyl-alpha-D-glucosamine = UDP-N-acetyl-3-O-(1-carboxyvinyl)-alpha-D-glucosamine + phosphate. The protein operates within cell wall biogenesis; peptidoglycan biosynthesis. Cell wall formation. Adds enolpyruvyl to UDP-N-acetylglucosamine. In Clostridium perfringens (strain 13 / Type A), this protein is UDP-N-acetylglucosamine 1-carboxyvinyltransferase 1.